Consider the following 499-residue polypeptide: 2-isopropylmalate synthase (499 aa).

The Pyruvate carboxyltransferase domain maps to 5–267 (IKIFDTTLRD…ETGINLGEIA (263 aa)). Positions 14, 202, 204, and 238 each coordinate Mn(2+). The interval 391–499 (SVEVLHVISG…YLSALNRIRR (109 aa)) is regulatory domain.

The protein belongs to the alpha-IPM synthase/homocitrate synthase family. LeuA type 1 subfamily. The cofactor is Mn(2+).

The protein resides in the cytoplasm. It carries out the reaction 3-methyl-2-oxobutanoate + acetyl-CoA + H2O = (2S)-2-isopropylmalate + CoA + H(+). It functions in the pathway amino-acid biosynthesis; L-leucine biosynthesis; L-leucine from 3-methyl-2-oxobutanoate: step 1/4. Its function is as follows. Catalyzes the condensation of the acetyl group of acetyl-CoA with 3-methyl-2-oxobutanoate (2-ketoisovalerate) to form 3-carboxy-3-hydroxy-4-methylpentanoate (2-isopropylmalate). The protein is 2-isopropylmalate synthase of Pyrococcus furiosus (strain ATCC 43587 / DSM 3638 / JCM 8422 / Vc1).